Consider the following 806-residue polypeptide: Phenylalanine--tRNA ligase beta subunit (806 aa).

In terms of domain architecture, tRNA-binding spans 44–158 (ADGLSKLVVG…EEAVPGDAIF (115 aa)). The B5 domain occupies 411 to 486 (TEPVEVSTSL…RIYGYDKLPT (76 aa)). 4 residues coordinate Mg(2+): Asp-464, Asp-470, Glu-473, and Glu-474. One can recognise an FDX-ACB domain in the interval 713-806 (TKFPAMTRDV…LTEQVGAEVR (94 aa)).

Belongs to the phenylalanyl-tRNA synthetase beta subunit family. Type 1 subfamily. Tetramer of two alpha and two beta subunits. Mg(2+) is required as a cofactor.

The protein resides in the cytoplasm. It catalyses the reaction tRNA(Phe) + L-phenylalanine + ATP = L-phenylalanyl-tRNA(Phe) + AMP + diphosphate + H(+). The sequence is that of Phenylalanine--tRNA ligase beta subunit from Streptococcus pyogenes serotype M28 (strain MGAS6180).